A 160-amino-acid polypeptide reads, in one-letter code: Endoribonuclease YbeY (160 aa).

Zn(2+) is bound by residues His-118, His-122, and His-128.

The protein belongs to the endoribonuclease YbeY family. It depends on Zn(2+) as a cofactor.

Its subcellular location is the cytoplasm. Its function is as follows. Single strand-specific metallo-endoribonuclease involved in late-stage 70S ribosome quality control and in maturation of the 3' terminus of the 16S rRNA. The sequence is that of Endoribonuclease YbeY from Treponema pallidum (strain Nichols).